The chain runs to 558 residues: 2-isopropylmalate synthase (558 aa).

Residues 30-303 enclose the Pyruvate carboxyltransferase domain; it reads PIWCSVDLRD…DPELDCRDIE (274 aa). 4 residues coordinate Mg(2+): aspartate 39, histidine 242, histidine 244, and asparagine 278. Residues 437 to 558 are regulatory domain; that stretch reads QPNARIKFVD…ANRVLEERAK (122 aa).

Belongs to the alpha-IPM synthase/homocitrate synthase family. LeuA type 2 subfamily. Homodimer. The cofactor is Mg(2+).

The protein resides in the cytoplasm. It catalyses the reaction 3-methyl-2-oxobutanoate + acetyl-CoA + H2O = (2S)-2-isopropylmalate + CoA + H(+). It participates in amino-acid biosynthesis; L-leucine biosynthesis; L-leucine from 3-methyl-2-oxobutanoate: step 1/4. Its function is as follows. Catalyzes the condensation of the acetyl group of acetyl-CoA with 3-methyl-2-oxobutanoate (2-ketoisovalerate) to form 3-carboxy-3-hydroxy-4-methylpentanoate (2-isopropylmalate). This chain is 2-isopropylmalate synthase, found in Agrobacterium fabrum (strain C58 / ATCC 33970) (Agrobacterium tumefaciens (strain C58)).